Reading from the N-terminus, the 746-residue chain is Polyphosphate kinase (746 aa).

Residues 1 to 17 (MRQPNTQAEAQHTQPSV) are compositionally biased toward polar residues. The tract at residues 1-60 (MRQPNTQAEAQHTQPSVGSIAAHRPNTVAATVSGLEPDIDADLDAYEESEESQDGGARLP) is disordered. Residues 37–53 (PDIDADLDAYEESEESQ) are compositionally biased toward acidic residues. Asparagine 102 provides a ligand contact to ATP. Mg(2+)-binding residues include arginine 429 and arginine 459. Residue histidine 489 is the Phosphohistidine intermediate of the active site. ATP-binding residues include tyrosine 522, arginine 618, and histidine 646.

The protein belongs to the polyphosphate kinase 1 (PPK1) family. Requires Mg(2+) as cofactor. An intermediate of this reaction is the autophosphorylated ppk in which a phosphate is covalently linked to a histidine residue through a N-P bond.

The catalysed reaction is [phosphate](n) + ATP = [phosphate](n+1) + ADP. Its function is as follows. Catalyzes the reversible transfer of the terminal phosphate of ATP to form a long-chain polyphosphate (polyP). The sequence is that of Polyphosphate kinase from Streptomyces coelicolor (strain ATCC BAA-471 / A3(2) / M145).